The sequence spans 486 residues: MATFKDACYYYKRINKLNHAVLKLGVNDTWRPSPPTKYKGWCLDCCQHTDLTYCRGCTMYHVCQWCSQYGRCFLDNEPHLLRMRTFKNEVTKDDLMNLVDMYDTLFPMNQKIVDKFINNTRQHKCRNECVNQWYNHLLMPITLQSLSIELDGDVYYIFGYYDDMNNVNQTPFSFVNLVDIYDKLLLDDVNFTRMSFLPVTLQQEYALRYFSKSRFISEQRKCVSDSHFSINVLENLHNPSFKMQITRNCSELSSDWNGACKLVKDTSAYFNILKTSHVEFYSISTRCRVFTQRKLKIASKLIKPNYITSNHRTSATEVHNCKWCSINSSYTVWNDFRVKKIYDNIFNFLRALVKSNVNVGHCSSQEKIYECVENILDVCDNEKWKTSVTKIFNYLEPVELNAVNYVLFNHEVNWDVINVLVQSIGKVPQILTLNDVTTIMQSIIYEWFDTKYMRNTPMTTFTVDKLRRLCTGSKTVDYDSGISDVE.

Residues 1–81 (MATFKDACYY…CFLDNEPHLL (81 aa)) form an RNA-binding region. The zinc-binding domain stretch occupies residues 42–79 (CLDCCQHTDLTYCRGCTMYHVCQWCSQYGRCFLDNEPH). An important for cytoskeleton localization region spans residues 82 to 176 (RMRTFKNEVT…VNQTPFSFVN (95 aa)). The tract at residues 317-486 (EVHNCKWCSI…DYDSGISDVE (170 aa)) is interaction with host IRF3. An IKBKB-like degron (ILD) motif motif is present at residues 479–483 (DSGIS). The short motif at 480–483 (SGIS) is the pLxIS motif element.

This sequence belongs to the rotavirus NSP1 family. Interacts (via C-terminus) with host IRF3; this interaction leads to IRF3 degradation. Interacts with host IRF7; this interaction leads to IRF7 degradation. Interacts with host CUL1 and CUL3. Interacts with host BTRC. Post-translationally, the C-terminal region is phosphorylated by host CKII/CSNK2A1. Phosphorylation of the DSGXS motif is essential for host NF-kappa-B inhibition.

The protein resides in the host cytoplasm. The protein localises to the host cytoskeleton. Functionally, plays a role in the inhibition of host innate immunity by inducing the degradation of key host factors required to activate interferon production such as IRF3, IRF5 or IRF7. Associates with components of cullin RING ligases (CRLs) including CUL1 or CUL3, which are essential multisubunit ubiquitination complexes, to modulate their activities. Recognizes the host NF-kappa-B regulator BTRC through the presence of a DSGXS motif in the C-terminal substrate recognition domain. The protein is Non-structural protein 1 of Sus scrofa (Pig).